Consider the following 188-residue polypeptide: Elongation factor P (188 aa).

Lys-34 carries the N6-(3,6-diaminohexanoyl)-5-hydroxylysine modification.

Belongs to the elongation factor P family. May be beta-lysylated on the epsilon-amino group of Lys-34 by the combined action of EpmA and EpmB, and then hydroxylated on the C5 position of the same residue by EpmC (if this protein is present). Lysylation is critical for the stimulatory effect of EF-P on peptide-bond formation. The lysylation moiety may extend toward the peptidyltransferase center and stabilize the terminal 3-CCA end of the tRNA. Hydroxylation of the C5 position on Lys-34 may allow additional potential stabilizing hydrogen-bond interactions with the P-tRNA.

The protein resides in the cytoplasm. It participates in protein biosynthesis; polypeptide chain elongation. Involved in peptide bond synthesis. Alleviates ribosome stalling that occurs when 3 or more consecutive Pro residues or the sequence PPG is present in a protein, possibly by augmenting the peptidyl transferase activity of the ribosome. Modification of Lys-34 is required for alleviation. In Vibrio campbellii (strain ATCC BAA-1116), this protein is Elongation factor P.